The following is a 78-amino-acid chain: Large ribosomal subunit protein bL28 (78 aa).

The tract at residues 1–31 is disordered; sequence MAAHCQVTGAEPGFGHSISHSHRRNKRRFDP.

This sequence belongs to the bacterial ribosomal protein bL28 family.

This is Large ribosomal subunit protein bL28 from Pseudarthrobacter chlorophenolicus (strain ATCC 700700 / DSM 12829 / CIP 107037 / JCM 12360 / KCTC 9906 / NCIMB 13794 / A6) (Arthrobacter chlorophenolicus).